The primary structure comprises 314 residues: Mitochondrial MRF1 N(5)-glutamine methyltransferase MTQ1 (314 aa).

S-adenosyl-L-methionine is bound by residues 118 to 122 (FTGTG), Asp141, and Asn188. 188-191 (NPPY) lines the substrate pocket.

Belongs to the protein N5-glutamine methyltransferase family.

The protein localises to the mitochondrion. The catalysed reaction is L-glutaminyl-[peptide chain release factor] + S-adenosyl-L-methionine = N(5)-methyl-L-glutaminyl-[peptide chain release factor] + S-adenosyl-L-homocysteine + H(+). Methylates MRF1 on 'Gln-287' using S-adenosyl L-methionine as methyl donor. This is Mitochondrial MRF1 N(5)-glutamine methyltransferase MTQ1 (MTQ1) from Saccharomyces cerevisiae (strain ATCC 204508 / S288c) (Baker's yeast).